A 400-amino-acid chain; its full sequence is Formate-dependent phosphoribosylglycinamide formyltransferase (400 aa).

Residues 22 to 23 (EL) and E82 each bind N(1)-(5-phospho-beta-D-ribosyl)glycinamide. ATP contacts are provided by residues R115, K156, 161-166 (SSGKGQ), 196-199 (EGFI), and E204. In terms of domain architecture, ATP-grasp spans 120–309 (RLAAETLCLP…EFALHARAIL (190 aa)). Residues E268 and E280 each coordinate Mg(2+). Residues D287, K361, and 368–369 (RR) each bind N(1)-(5-phospho-beta-D-ribosyl)glycinamide.

It belongs to the PurK/PurT family. As to quaternary structure, homodimer.

It carries out the reaction N(1)-(5-phospho-beta-D-ribosyl)glycinamide + formate + ATP = N(2)-formyl-N(1)-(5-phospho-beta-D-ribosyl)glycinamide + ADP + phosphate + H(+). The protein operates within purine metabolism; IMP biosynthesis via de novo pathway; N(2)-formyl-N(1)-(5-phospho-D-ribosyl)glycinamide from N(1)-(5-phospho-D-ribosyl)glycinamide (formate route): step 1/1. Functionally, involved in the de novo purine biosynthesis. Catalyzes the transfer of formate to 5-phospho-ribosyl-glycinamide (GAR), producing 5-phospho-ribosyl-N-formylglycinamide (FGAR). Formate is provided by PurU via hydrolysis of 10-formyl-tetrahydrofolate. The sequence is that of Formate-dependent phosphoribosylglycinamide formyltransferase from Xanthomonas euvesicatoria pv. vesicatoria (strain 85-10) (Xanthomonas campestris pv. vesicatoria).